The following is a 139-amino-acid chain: Translation initiation factor 5A (139 aa).

Lysine 36 is subject to Hypusine.

Belongs to the eIF-5A family.

It localises to the cytoplasm. In terms of biological role, functions by promoting the formation of the first peptide bond. This Aeropyrum pernix (strain ATCC 700893 / DSM 11879 / JCM 9820 / NBRC 100138 / K1) protein is Translation initiation factor 5A (eif5a).